The primary structure comprises 229 residues: Large ribosomal subunit protein uL1 (229 aa).

The protein belongs to the universal ribosomal protein uL1 family. As to quaternary structure, part of the 50S ribosomal subunit.

In terms of biological role, binds directly to 23S rRNA. The L1 stalk is quite mobile in the ribosome, and is involved in E site tRNA release. Functionally, protein L1 is also a translational repressor protein, it controls the translation of the L11 operon by binding to its mRNA. The sequence is that of Large ribosomal subunit protein uL1 from Lacticaseibacillus casei (strain BL23) (Lactobacillus casei).